Consider the following 435-residue polypeptide: AP-2 complex subunit mu (435 aa).

Ser45 carries the post-translational modification Phosphoserine. Thr156 is subject to Phosphothreonine. Positions 170–434 constitute an MHD domain; that stretch reads RNELFLDVLE…IGRSGIYETR (265 aa). Positions 341, 345, and 354 each coordinate a 1,2-diacyl-sn-glycero-3-phospho-(1D-myo-inositol-3,4,5-trisphosphate).

Belongs to the adaptor complexes medium subunit family. As to quaternary structure, adaptor protein complex 2 (AP-2) is a heterotetramer composed of two large adaptins (alpha-type subunit AP2A1 or AP2A2 and beta-type subunit AP2B1), a medium adaptin (mu-type subunit AP2M1) and a small adaptin (sigma-type subunit AP2S1). Interacts with ATP6V1H and MEGF10. Interacts with EGFR. Interacts with PIP5K1C; tyrosine phosphorylation of PIP5K1C weakens the interaction. Interacts with KIAA0319; required for clathrin-mediated endocytosis of KIAA0319. Interacts with DVL2 (via DEP domain). Interacts with KCNQ1; mediates estrogen-induced internalization via clathrin-coated vesicles. Together with AP2A1 or AP2A2 and AP2B1, it interacts with ADAM10; this interaction facilitates ADAM10 endocytosis from the plasma membrane during long-term potentiation in hippocampal neurons. Probably interacts with ACE2 (via endocytic sorting signal motif); the interaction is inhibited by ACE2 phosphorylation. Interacts with RALBP1; the interaction is direct. Interacts with TMEM106B (via N-terminus). Phosphorylation at Thr-156 increases the affinity of the AP-2 complex for cargo membrane proteins during the initial stages of endocytosis.

The protein resides in the cell membrane. It is found in the membrane. Its subcellular location is the coated pit. Its function is as follows. Component of the adaptor protein complex 2 (AP-2). Adaptor protein complexes function in protein transport via transport vesicles in different membrane traffic pathways. Adaptor protein complexes are vesicle coat components and appear to be involved in cargo selection and vesicle formation. AP-2 is involved in clathrin-dependent endocytosis in which cargo proteins are incorporated into vesicles surrounded by clathrin (clathrin-coated vesicles, CCVs) which are destined for fusion with the early endosome. The clathrin lattice serves as a mechanical scaffold but is itself unable to bind directly to membrane components. Clathrin-associated adaptor protein (AP) complexes which can bind directly to both the clathrin lattice and to the lipid and protein components of membranes are considered to be the major clathrin adaptors contributing the CCV formation. AP-2 also serves as a cargo receptor to selectively sort the membrane proteins involved in receptor-mediated endocytosis. AP-2 seems to play a role in the recycling of synaptic vesicle membranes from the presynaptic surface. AP-2 recognizes Y-X-X-[FILMV] (Y-X-X-Phi) and [ED]-X-X-X-L-[LI] endocytosis signal motifs within the cytosolic tails of transmembrane cargo molecules. AP-2 may also play a role in maintaining normal post-endocytic trafficking through the ARF6-regulated, non-clathrin pathway. During long-term potentiation in hippocampal neurons, AP-2 is responsible for the endocytosis of ADAM10. The AP-2 mu subunit binds to transmembrane cargo proteins; it recognizes the Y-X-X-Phi motifs. The surface region interacting with to the Y-X-X-Phi motif is inaccessible in cytosolic AP-2, but becomes accessible through a conformational change following phosphorylation of AP-2 mu subunit at Thr-156 in membrane-associated AP-2. The membrane-specific phosphorylation event appears to involve assembled clathrin which activates the AP-2 mu kinase AAK1. Plays a role in endocytosis of frizzled family members upon Wnt signaling. This is AP-2 complex subunit mu (AP2M1) from Pongo abelii (Sumatran orangutan).